Here is a 222-residue protein sequence, read N- to C-terminus: Peptidyl-prolyl cis-trans isomerase FKBP7 (222 aa).

Residues 1–23 (MPKTMHFLFRFIVFFYLWGLFTA) form the signal peptide. N45 carries an N-linked (GlcNAc...) asparagine glycan. In terms of domain architecture, PPIase FKBP-type spans 53–145 (GDLLNAHYDG…IFEIELYAVT (93 aa)). EF-hand domains follow at residues 145–180 (TKGP…EFEK) and 189–222 (YQDA…HDEL). Ca(2+)-binding residues include D158, D160, D162, Q164, E169, D202, D204, D206, and E213. The Prevents secretion from ER signature appears at 219-222 (HDEL).

In terms of processing, glycosylated.

The protein localises to the endoplasmic reticulum lumen. It catalyses the reaction [protein]-peptidylproline (omega=180) = [protein]-peptidylproline (omega=0). Its function is as follows. PPIases accelerate the folding of proteins during protein synthesis. This Pongo abelii (Sumatran orangutan) protein is Peptidyl-prolyl cis-trans isomerase FKBP7 (FKBP7).